The chain runs to 828 residues: Periplasmic nitrate reductase (828 aa).

Residues 1-32 constitute a signal peptide (tat-type signal); the sequence is MNLSRRDFMKTNAAVAAAAVAGLAIPVKNVEA. The 57-residue stretch at 38-94 folds into the 4Fe-4S Mo/W bis-MGD-type domain; sequence IKWDKAPCRFCGTGCSVLVGTQNGRVVASQGDPDADVNRGLNCIKGYFLPKIMYGKD. [4Fe-4S] cluster is bound by residues cysteine 45, cysteine 48, cysteine 52, and cysteine 80. Residues lysine 82, glutamine 149, asparagine 174, cysteine 178, 211–218, 242–246, 261–263, methionine 372, glutamine 376, asparagine 482, 508–509, lysine 531, aspartate 558, and 718–727 each bind Mo-bis(molybdopterin guanine dinucleotide); these read WGSNMAEM, STFEH, QSD, SD, and TGRVLEHWHT. Phenylalanine 794 provides a ligand contact to substrate. Residues asparagine 802 and lysine 819 each contribute to the Mo-bis(molybdopterin guanine dinucleotide) site.

Belongs to the prokaryotic molybdopterin-containing oxidoreductase family. NasA/NapA/NarB subfamily. In terms of assembly, component of the periplasmic nitrate reductase NapAB complex composed of NapA and NapB. [4Fe-4S] cluster serves as cofactor. It depends on Mo-bis(molybdopterin guanine dinucleotide) as a cofactor. Post-translationally, predicted to be exported by the Tat system. The position of the signal peptide cleavage has not been experimentally proven.

The protein localises to the periplasm. It carries out the reaction 2 Fe(II)-[cytochrome] + nitrate + 2 H(+) = 2 Fe(III)-[cytochrome] + nitrite + H2O. Catalytic subunit of the periplasmic nitrate reductase complex NapAB. Receives electrons from NapB and catalyzes the reduction of nitrate to nitrite. The protein is Periplasmic nitrate reductase of Pasteurella multocida (strain Pm70).